The primary structure comprises 504 residues: UDP-N-acetylmuramoylalanine--D-glutamate ligase (504 aa).

Residue 129–135 (GTNGKTT) participates in ATP binding.

Belongs to the MurCDEF family.

Its subcellular location is the cytoplasm. It catalyses the reaction UDP-N-acetyl-alpha-D-muramoyl-L-alanine + D-glutamate + ATP = UDP-N-acetyl-alpha-D-muramoyl-L-alanyl-D-glutamate + ADP + phosphate + H(+). The protein operates within cell wall biogenesis; peptidoglycan biosynthesis. Functionally, cell wall formation. Catalyzes the addition of glutamate to the nucleotide precursor UDP-N-acetylmuramoyl-L-alanine (UMA). The protein is UDP-N-acetylmuramoylalanine--D-glutamate ligase of Burkholderia thailandensis (strain ATCC 700388 / DSM 13276 / CCUG 48851 / CIP 106301 / E264).